The sequence spans 312 residues: Urease accessory protein UreD (312 aa).

The protein belongs to the UreD family. UreD, UreF and UreG form a complex that acts as a GTP-hydrolysis-dependent molecular chaperone, activating the urease apoprotein by helping to assemble the nickel containing metallocenter of UreC. The UreE protein probably delivers the nickel.

It localises to the cytoplasm. Functionally, required for maturation of urease via the functional incorporation of the urease nickel metallocenter. The polypeptide is Urease accessory protein UreD (Marinomonas sp. (strain MWYL1)).